The sequence spans 205 residues: Outer-membrane lipoprotein LolB (205 aa).

An N-terminal signal peptide occupies residues 1–17; that stretch reads MFLRHCITFTMIALLAG. C18 is lipidated: N-palmitoyl cysteine. Residue C18 is the site of S-diacylglycerol cysteine attachment.

This sequence belongs to the LolB family. In terms of assembly, monomer.

Its subcellular location is the cell outer membrane. Functionally, plays a critical role in the incorporation of lipoproteins in the outer membrane after they are released by the LolA protein. The protein is Outer-membrane lipoprotein LolB of Pseudomonas putida (strain ATCC 700007 / DSM 6899 / JCM 31910 / BCRC 17059 / LMG 24140 / F1).